We begin with the raw amino-acid sequence, 186 residues long: Histone deacetylase complex subunit SAP25 (186 aa).

Disordered regions lie at residues 1–25 and 148–186; these read MSPL…PSCG and EQTP…GTDT. Polar residues-rich tracts occupy residues 148–163 and 177–186; these read EQTP…STSC and GDQSCSGTDT.

As to quaternary structure, may be a component of the mSIN3A corepressor complex. Interacts with SIN3A and HDAC2. As to expression, widely expressed.

It is found in the nucleus. The protein resides in the cytoplasm. Functionally, involved in the transcriptional repression mediated by the mSIN3A but not the N-CoR corepressor complex. This chain is Histone deacetylase complex subunit SAP25 (Sap25), found in Mus musculus (Mouse).